A 633-amino-acid chain; its full sequence is DNA mismatch repair protein MutL (633 aa).

2 disordered regions span residues 337–364 (RPDD…GEFG) and 383–405 (VGWS…TRPE). The segment covering 385–396 (WSGGSSASGGSS) has biased composition (gly residues).

It belongs to the DNA mismatch repair MutL/HexB family.

Its function is as follows. This protein is involved in the repair of mismatches in DNA. It is required for dam-dependent methyl-directed DNA mismatch repair. May act as a 'molecular matchmaker', a protein that promotes the formation of a stable complex between two or more DNA-binding proteins in an ATP-dependent manner without itself being part of a final effector complex. This Pseudomonas aeruginosa (strain UCBPP-PA14) protein is DNA mismatch repair protein MutL.